Consider the following 207-residue polypeptide: Sodium/potassium-transporting ATPase subunit beta-1-interacting protein 1 (207 aa).

3 helical membrane-spanning segments follow: residues 2–22 (GRCS…AAAL), 35–55 (APIL…LGTL), and 62–82 (LILY…IICF). Asn100 carries N-linked (GlcNAc...) asparagine glycosylation. A helical transmembrane segment spans residues 147–167 (ALSSALQIFLALFGFVYACYV).

It belongs to the NKAIN family. In terms of assembly, interacts with atp1b1 C-terminus.

It localises to the cell membrane. This Xenopus laevis (African clawed frog) protein is Sodium/potassium-transporting ATPase subunit beta-1-interacting protein 1 (nkain1).